The chain runs to 436 residues: Aminotransferase tdiD (436 aa).

Substrate is bound by residues arginine 30, tyrosine 86, tyrosine 148, and asparagine 202. At lysine 270 the chain carries N6-(pyridoxal phosphate)lysine. Arginine 407 is a substrate binding site.

Belongs to the class-I pyridoxal-phosphate-dependent aminotransferase family. Requires pyridoxal 5'-phosphate as cofactor.

The enzyme catalyses 3-phenylpyruvate + L-tryptophan = indole-3-pyruvate + L-phenylalanine. Its pathway is secondary metabolite biosynthesis. Aminotransferase; part of the gene cluster that mediates the biosynthesis of terrequinone A, an antitumor agent. The first step in the biosynthetic pathway for terrequinone A is formation of indole pyruvic acid (IPA) from L-tryptophan by the aminotransferase tdiD. The nonribosomal peptide synthase tdiA then immediately converts unstable IPA to didemethylasterriquinone D (DDAQ D), via condensation of 2 IPA molecules. The symmetric connectivity of the 2 IPA molecules is thought to arise by head-to-tail dual Claisen condensations facilitated by the TE domain. TdiB then catalyzes reverse prenylation by transferring dimethylallyl diphosphate to carbon atom 2' of DDAQ D, to yield asterriquinone C-1. Finally, tdiC and tdiE enzymes robustly convert asterriquinone C-1 to terrequinone A via a transformation involving regular prenylation at carbon atom 5, which requires elimination of the hydroxy group on C-5. The chain is Aminotransferase tdiD from Emericella nidulans (strain FGSC A4 / ATCC 38163 / CBS 112.46 / NRRL 194 / M139) (Aspergillus nidulans).